Consider the following 122-residue polypeptide: Large ribosomal subunit protein uL14 (122 aa).

Belongs to the universal ribosomal protein uL14 family. As to quaternary structure, part of the 50S ribosomal subunit. Forms a cluster with proteins L3 and L19. In the 70S ribosome, L14 and L19 interact and together make contacts with the 16S rRNA in bridges B5 and B8.

Its function is as follows. Binds to 23S rRNA. Forms part of two intersubunit bridges in the 70S ribosome. This is Large ribosomal subunit protein uL14 from Chlamydia muridarum (strain MoPn / Nigg).